The primary structure comprises 157 residues: MNLNATLIAQLVVFFILAWVTMKFVWPPIVKALDERAKKIADGLAAADKAKADLSLAEKKVVDELRKARESAGDVRASAEKQAAKFLDDARAEAARIIAQAREAAEAEAGTAAQRAKEALRDQVAHLAVAGAEKILRREINAQVHADLLANLKTELQ.

The chain crosses the membrane as a helical span at residues 7-27 (LIAQLVVFFILAWVTMKFVWP).

This sequence belongs to the ATPase B chain family. In terms of assembly, F-type ATPases have 2 components, F(1) - the catalytic core - and F(0) - the membrane proton channel. F(1) has five subunits: alpha(3), beta(3), gamma(1), delta(1), epsilon(1). F(0) has three main subunits: a(1), b(2) and c(10-14). The alpha and beta chains form an alternating ring which encloses part of the gamma chain. F(1) is attached to F(0) by a central stalk formed by the gamma and epsilon chains, while a peripheral stalk is formed by the delta and b chains.

It localises to the cell inner membrane. Its function is as follows. F(1)F(0) ATP synthase produces ATP from ADP in the presence of a proton or sodium gradient. F-type ATPases consist of two structural domains, F(1) containing the extramembraneous catalytic core and F(0) containing the membrane proton channel, linked together by a central stalk and a peripheral stalk. During catalysis, ATP synthesis in the catalytic domain of F(1) is coupled via a rotary mechanism of the central stalk subunits to proton translocation. Functionally, component of the F(0) channel, it forms part of the peripheral stalk, linking F(1) to F(0). In Aromatoleum aromaticum (strain DSM 19018 / LMG 30748 / EbN1) (Azoarcus sp. (strain EbN1)), this protein is ATP synthase subunit b.